A 2303-amino-acid polypeptide reads, in one-letter code: MASSVAPYEQLVRQVEALKAENSHLRQELRDNSSHLSKLETETSGMKEVLKHLQGKLEQEARVLVSSGQTEVLEQLKALQMDITSLYNLKFQPPTLGPEPAARTPEGSPVHGSGPSKDSFGELSRATIRLLEELDRERCFLLNEIEKEEKEKLWYYSQLQGLSKRLDELPHVETQFSMQMDLIRQQLEFEAQHIRSLMEERFGTSDEMVQRAQIRASRLEQIDKELLEAQDRVQQTEPQALLAVKSVPVDEDPETEVPTHPEDGTPQPGNSKVEVVFWLLSMLATRDQEDTARTLLAMSSSPESCVAMRRSGCLPLLLQILHGTEAAAGGRAGAPGAPGAKDARMRANAALHNIVFSQPDQGLARKEMRVLHVLEQIRAYCETCWDWLQARDGGPEGGGAGSAPIPIEPQICQATCAVMKLSFDEEYRRAMNELGGLQAVAELLQVDYEMHKMTRDPLNLALRRYAGMTLTNLTFGDVANKATLCARRGCMEAIVAQLASDSEELHQVVSSILRNLSWRADINSKKVLREAGSVTALVQCVLRATKESTLKSVLSALWNLSAHSTENKAAICQVDGALGFLVSTLTYKCQSNSLAIIESGGGILRNVSSLVATREDYRQVLRDHNCLQTLLQHLTSHSLTIVSNACGTLWNLSARSARDQELLWDLGAVGMLRNLVHSKHKMIAMGSAAALRNLLAHRPAKHQAAATAVSPGSCVPSLYVRKQRALEAELDARHLAQALEHLEKQGPPAAEAATKKPLPPLRHLDGLAQDYASDSGCFDDDDAPSSLAAAAATGEPASPAALSLFLGSPFLQGQALARTPPTRRGGKEAEKDTSGEAAVAAKAKAKLALAVARIDQLVEDISALHTSSDDSFSLSSGDPGQEAPREGRAQSCSPCRGPEGGRREAGSRAHPLLRLKAAHASLSNDSLNSGSASDGYCPREHMLPCPLAALASRREDPRCGQPRPSRLDLDLPGCQAEPPAREATSADARVRTIKLSPTYQHVPLLEGASRAGAEPLAGPGISPGARKQAWLPADHLSKVPEKLAAAPLSVASKALQKLAAQEGPLSLSRCSSLSSLSSAGRPGPSEGGDLDDSDSSLEGLEEAGPSEAELDSTWRAPGATSLPVAIPAPRRNRGRGLGVEDATPSSSSENYVQETPLVLSRCSSVSSLGSFESPSIASSIPSEPCSGQGSGTISPSELPDSPGQTMPPSRSKTPPLAPAPQGPPEATQFSLQWESYVKRFLDIADCRERCRLPSELDAGSVRFTVEKPDENFSCASSLSALALHEHYVQQDVELRLLPSACPERGGGAGGAGLHFAGHRRREEGPAPTGSRPRGAADQELELLRECLGAAVPARLRKVASALVPGRRALPVPVYMLVPAPAPAQEDDSCTDSAEGTPVNFSSAASLSDETLQGPPRDQPGGPAGRQRPTGRPTSARQAMGHRHKAGGAGRSAEQSRGAGKNRAGLELPLGRPPSAPADKDGSKPGRTRGDGALQSLCLTTPTEEAVYCFYGNDSDEEPPAAAPTPTHRRTSAIPRAFTRERPQGRKEAPAPSKAAPAAPPPARTQPSLIADETPPCYSLSSSASSLSEPEPSEPPAVHPRGREPAVTKDPGPGGGRDSSPSPRAAEELLQRCISSALPRRRPPVSGLRRRKPRATRLDERPAEGSRERGEEAAGSDRASDLDSVEWRAIQEGANSIVTWLHQAAAATREASSESDSILSFVSGLSVGSTLQPPKHRKGRQAEGEMGSARRPEKRGAASVKTSGSPRSPAGPEKPRGTQKTTPGVPAVLRGRTVIYVPSPAPRAQPKGTPGPRATPRKVAPPCLAQPAAPAKVPSPGQQRSRSLHRPAKTSELATLSQPPRSATPPARLAKTPSSSSSQTSPASQPLPRKRPPVTQAAGALPGPGASPVPKTPARTLLAKQHKTQRSPVRIPFMQRPARRGPPPLARAVPEPGPRGRAGTEAGPGARGGRLGLVRVASALSSGSESSDRSGFRRQLTFIKESPGLRRRRSELSSAESAASAPQGASPRRGRPALPAVFLCSSRCEELRAAPRQGPAPARQRPPAARPSPGERPARRTTSESPSRLPVRAPAARPETVKRYASLPHISVARRPDGAVPAAPASADAARRSSDGEPRPLPRVAAPGTTWRRIRDEDVPHILRSTLPATALPLRGSTPEDAPAGPPPRKTSDAVVQTEEVAAPKTNSSTSPSLETREPPGAPAGGQLSLLGSDVDGPSLAKAPISAPFVHEGLGVAVGGFPASRHGSPSRSARVPPFNYVPSPMVVAATTDSAAEKAPATASATLLE.

Residues 8–59 (YEQLVRQVEALKAENSHLRQELRDNSSHLSKLETETSGMKEVLKHLQGKLEQ) adopt a coiled-coil conformation. Disordered stretches follow at residues 94–120 (PTLGPEPAARTPEGSPVHGSGPSKDSF) and 247–270 (VPVDEDPETEVPTHPEDGTPQPGN). ARM repeat units lie at residues 302-341 (PESCVAMRRSGCLPLLLQILHGTEAAAGGRAGAPGAPGAK), 479-518 (ANKATLCARRGCMEAIVAQLASDSEELHQVVSSILRNLSW), 522-562 (INSK…NLSA), 566-609 (ENKA…NVSS), 615-654 (EDYRQVLRDHNCLQTLLQHLTSHSLTIVSNACGTLWNLSA), and 657-696 (ARDQELLWDLGAVGMLRNLVHSKHKMIAMGSAAALRNLLA). Disordered regions lie at residues 744-764 (KQGPPAAEAATKKPLPPLRHL) and 816-835 (LARTPPTRRGGKEAEKDTSG). A compositionally biased stretch (basic and acidic residues) spans 825-834 (GGKEAEKDTS). Residues 840-864 (AAKAKAKLALAVARIDQLVEDISAL) adopt a coiled-coil conformation. Disordered stretches follow at residues 867-908 (SSDD…AGSR), 953-986 (RREDPRCGQPRPSRLDLDLPGCQAEPPAREATSA), 1069-1152 (RCSS…ENYV), and 1173-1228 (SPSI…EATQ). The span at 869 to 878 (DDSFSLSSGD) shows a compositional bias: low complexity. The stretch at 1058 to 1077 (LAAQEGPLSLSRCSSLSSLS) is repeat 1. Residues 1058-1587 (LAAQEGPLSL…SLSSSASSLS (530 aa)) form a 5 X 20 AA approximate repeat of F-X-V-E-X-T-P-X-C-F-S-R-X-S-S-L-S-S-L-S region. The interaction with CTNNB1 stretch occupies residues 1058–1587 (LAAQEGPLSL…SLSSSASSLS (530 aa)). Residues 1069–1084 (RCSSLSSLSSAGRPGP) show a composition bias toward low complexity. The span at 1088–1101 (GDLDDSDSSLEGLE) shows a compositional bias: acidic residues. Residues 1143 to 1152 (TPSSSSENYV) are compositionally biased toward polar residues. Residues 1150–1169 (NYVQETPLVLSRCSSVSSLG) form repeat 2. Over residues 1173 to 1186 (SPSIASSIPSEPCS) the composition is skewed to low complexity. Residues 1202-1212 (PGQTMPPSRSK) are compositionally biased toward polar residues. Repeat unit 3 spans residues 1263-1282 (FTVEKPDENFSCASSLSALA). 5 disordered regions span residues 1307–1335 (GAGGAGLHFAGHRRREEGPAPTGSRPRGA), 1382–1497 (PAQE…QSLC), 1510–1684 (YGND…LDSV), 1724–2031 (LSVG…RGRP), and 2046–2232 (LRAA…DVDG). Residues 1390–1410 (TDSAEGTPVNFSSAASLSDET) are compositionally biased toward polar residues. The stretch at 1391–1410 (DSAEGTPVNFSSAASLSDET) is repeat 4. Composition is skewed to basic and acidic residues over residues 1477–1489 (ADKDGSKPGRTRG) and 1537–1548 (FTRERPQGRKEA). Repeat 5 spans residues 1568-1587 (LIADETPPCYSLSSSASSLS). Positions 1578–1589 (SLSSSASSLSEP) are enriched in low complexity. Phosphoserine is present on residues serine 1585 and serine 1587. Basic residues predominate over residues 1638-1654 (PRRRPPVSGLRRRKPRA). 2 stretches are compositionally biased toward basic and acidic residues: residues 1655–1671 (TRLDERPAEGSRERGEE) and 1739–1755 (RQAEGEMGSARRPEKRG). The segment covering 1819-1830 (APPCLAQPAAPA) has biased composition (low complexity). The interval 1821-1900 (PCLAQPAAPA…PPVTQAAGAL (80 aa)) is required for localization to microtubules and function in microtubule stabilization. Residues 1851 to 1860 (ELATLSQPPR) are compositionally biased toward polar residues. Composition is skewed to low complexity over residues 1868–1886 (LAKTPSSSSSQTSPASQPL), 1971–1984 (GLVRVASALSSGSE), 2011–2026 (LSSAESAASAPQGASP), 2049–2062 (APRQGPAPARQRPP), and 2113–2123 (GAVPAAPASAD). An interaction with MAPRE1 and MAPRE3 region spans residues 2067 to 2144 (SPGERPARRT…PLPRVAAPGT (78 aa)). Residues 2124 to 2135 (AARRSSDGEPRP) show a composition bias toward basic and acidic residues. The span at 2200 to 2209 (KTNSSTSPSL) shows a compositional bias: polar residues.

Belongs to the adenomatous polyposis coli (APC) family. In terms of assembly, interacts with PSRC1. Interacts with APC. Interacts with CTNNB1. Interacts with MAPRE1 and MAPRE3. Interacts with TP53BP. Interacts possibly with AXIN2. Widely expressed (at protein level). Specifically expressed in the CNS.

The protein localises to the cytoplasm. Its subcellular location is the cytoskeleton. The protein resides in the golgi apparatus. It localises to the perinuclear region. Its function is as follows. Stabilizes microtubules and may regulate actin fiber dynamics through the activation of Rho family GTPases. May also function in Wnt signaling by promoting the rapid degradation of CTNNB1. This is Adenomatous polyposis coli protein 2 from Homo sapiens (Human).